The following is a 436-amino-acid chain: GTPase Der (436 aa).

2 consecutive EngA-type G domains span residues 4–167 (PVVA…KDEE) and 176–351 (IKLS…ENHK). GTP contacts are provided by residues 10–17 (GRPNVGKS), 57–61 (DTGGI), 119–122 (NKVD), 182–189 (GRPNVGKS), 229–233 (DTAGM), and 294–297 (NKWD). A KH-like domain is found at 352-436 (KRVQSSTLNE…PIRIIPRKRN (85 aa)).

It belongs to the TRAFAC class TrmE-Era-EngA-EngB-Septin-like GTPase superfamily. EngA (Der) GTPase family. In terms of assembly, associates with the 50S ribosomal subunit.

Functionally, GTPase that plays an essential role in the late steps of ribosome biogenesis. This chain is GTPase Der, found in Staphylococcus carnosus (strain TM300).